The following is a 325-amino-acid chain: Ribosomal RNA small subunit methyltransferase H (325 aa).

S-adenosyl-L-methionine contacts are provided by residues 33–35 (GGH), D52, L87, D101, and Q108. A disordered region spans residues 285–325 (AEPAGEVEKADNPRAASVRLRAAERTAPNPDRTQPTIGGAS). Positions 315 to 325 (DRTQPTIGGAS) are enriched in polar residues.

Belongs to the methyltransferase superfamily. RsmH family.

The protein resides in the cytoplasm. The catalysed reaction is cytidine(1402) in 16S rRNA + S-adenosyl-L-methionine = N(4)-methylcytidine(1402) in 16S rRNA + S-adenosyl-L-homocysteine + H(+). Specifically methylates the N4 position of cytidine in position 1402 (C1402) of 16S rRNA. This is Ribosomal RNA small subunit methyltransferase H from Frankia alni (strain DSM 45986 / CECT 9034 / ACN14a).